Here is a 610-residue protein sequence, read N- to C-terminus: UvrABC system protein C (610 aa).

One can recognise a GIY-YIG domain in the interval 16-94 (NQPGVYRMYD…IKRYQPRYNV (79 aa)). The region spanning 204-239 (SQVIDALVARMEEASRALRFEEAARLRDQIQAVRRV) is the UVR domain.

The protein belongs to the UvrC family. In terms of assembly, interacts with UvrB in an incision complex.

It is found in the cytoplasm. The UvrABC repair system catalyzes the recognition and processing of DNA lesions. UvrC both incises the 5' and 3' sides of the lesion. The N-terminal half is responsible for the 3' incision and the C-terminal half is responsible for the 5' incision. This chain is UvrABC system protein C, found in Edwardsiella ictaluri (strain 93-146).